The chain runs to 344 residues: Phosphoribosylformylglycinamidine cyclo-ligase (344 aa).

This sequence belongs to the AIR synthase family.

It is found in the cytoplasm. The catalysed reaction is 2-formamido-N(1)-(5-O-phospho-beta-D-ribosyl)acetamidine + ATP = 5-amino-1-(5-phospho-beta-D-ribosyl)imidazole + ADP + phosphate + H(+). Its pathway is purine metabolism; IMP biosynthesis via de novo pathway; 5-amino-1-(5-phospho-D-ribosyl)imidazole from N(2)-formyl-N(1)-(5-phospho-D-ribosyl)glycinamide: step 2/2. The polypeptide is Phosphoribosylformylglycinamidine cyclo-ligase (Anaeromyxobacter sp. (strain Fw109-5)).